A 255-amino-acid polypeptide reads, in one-letter code: Large ribosomal subunit protein uL4 (255 aa).

Belongs to the universal ribosomal protein uL4 family. As to quaternary structure, part of the 50S ribosomal subunit.

Functionally, one of the primary rRNA binding proteins, this protein initially binds near the 5'-end of the 23S rRNA. It is important during the early stages of 50S assembly. It makes multiple contacts with different domains of the 23S rRNA in the assembled 50S subunit and ribosome. Forms part of the polypeptide exit tunnel. The polypeptide is Large ribosomal subunit protein uL4 (Thermococcus onnurineus (strain NA1)).